An 88-amino-acid chain; its full sequence is Beta-insect excitatory toxin BmKIT1 (88 aa).

The first 18 residues, 1 to 18, serve as a signal peptide directing secretion; it reads MKFFLIFLVIFPIMGVLG. The LCN-type CS-alpha/beta domain occupies 20-83; sequence KNGYAVDSSG…IKDATKSYCD (64 aa). Intrachain disulfides connect C34-C55, C40-C60, C44-C62, and C56-C82. Position 87 is an isoleucine amide (I87).

This sequence belongs to the long (4 C-C) scorpion toxin superfamily. Sodium channel inhibitor family. Beta subfamily. Expressed by the venom gland.

The protein localises to the secreted. Functionally, excitatory insect beta-toxins induce a spastic paralysis. They bind voltage-independently at site-4 of sodium channels (Nav) and shift the voltage of activation toward more negative potentials thereby affecting sodium channel activation and promoting spontaneous and repetitive firing. This toxin is active only on insects. This Olivierus martensii (Manchurian scorpion) protein is Beta-insect excitatory toxin BmKIT1.